The chain runs to 163 residues: Secretory-abundant heat soluble protein 53582 (163 aa).

An N-terminal signal peptide occupies residues 1–19 (MARLFVAVALFGVVAFAAA). The segment at 22–51 (EWTGKTWLGSWASTDRAENWEAFVDALGLP) is SAHS-c1. An SAHS-c2 region spans residues 67 to 95 (YKQGDKYHHEVSIPSKNFKKAIEYTLGTE). Residues 108–157 (KYTEDGEKLVADVQIPSKNKQIHDIYEVQGDTLTKTYKVGDVVAKRWFTR) form an SAHS-c3 region.

This sequence belongs to the Secretory-abundant heat soluble protein (SAHS) family.

Its subcellular location is the secreted. Its function is as follows. Secreted heat soluble protein acting as a molecular shield in water-deficient condition. Tardigrade-specific intrinsically disordered proteins (TDPs) are essential for desiccation tolerance by forming non-crystalline amorphous solids upon desiccation, and this vitrified state mirrors their protective capabilities. This Hypsibius exemplaris (Freshwater tardigrade) protein is Secretory-abundant heat soluble protein 53582.